The following is a 162-amino-acid chain: Putative pre-16S rRNA nuclease (162 aa).

Belongs to the YqgF nuclease family.

It localises to the cytoplasm. In terms of biological role, could be a nuclease involved in processing of the 5'-end of pre-16S rRNA. This is Putative pre-16S rRNA nuclease from Brucella melitensis biotype 1 (strain ATCC 23456 / CCUG 17765 / NCTC 10094 / 16M).